Reading from the N-terminus, the 318-residue chain is Putative enoyl-CoA hydratase EchA13 (318 aa).

The segment at 90-110 (LGSADDIRERSPGPDQHPSYR) is disordered.

This sequence belongs to the enoyl-CoA hydratase/isomerase family.

This is Putative enoyl-CoA hydratase EchA13 (echA13) from Mycobacterium tuberculosis (strain ATCC 25618 / H37Rv).